A 70-amino-acid chain; its full sequence is Envelope small membrane protein (70 aa).

Glycine 2 is lipidated: N-myristoyl glycine; by host. The tract at residues glycine 2–alanine 15 is endoplasmic reticulum retention signal. At glycine 2–aspartate 25 the chain is on the virion surface side. Residues isoleucine 26–leucine 46 traverse the membrane as a helical segment. Residues leucine 47–leucine 70 are Intravirion-facing.

It belongs to the arteriviridae E protein family. In terms of assembly, homooligomer. Associates with itself into higher-order structures, including dimers, trimers and tetramers. Associates with the GP2a-GP3-GP4 complex. In terms of processing, myristoylated. Post-translationally, not glycosylated.

The protein resides in the virion membrane. It localises to the host endoplasmic reticulum membrane. Its subcellular location is the host Golgi apparatus membrane. It is found in the secreted. Its function is as follows. Minor envelope protein. May function as a viroporin in the virion envelope that facilitates uncoating of the virus in order to release the genomic RNA into the cytoplasm for subsequent replication. In Sus scrofa (Pig), this protein is Envelope small membrane protein (GP2b).